A 493-amino-acid chain; its full sequence is Dipeptide and tripeptide permease B (493 aa).

The Cytoplasmic portion of the chain corresponds to 1-27; that stretch reads MERSTPTGLLQQPKPFFMIFFVELWER. Residues 28–48 traverse the membrane as a helical segment; it reads FGYYGVQGILAVFFVQQLGFS. At 49–52 the chain is on the periplasmic side; sequence QEQA. A helical transmembrane segment spans residues 53-73; that stretch reads FVTFGAFAALVYGLISIGGYV. The Cytoplasmic portion of the chain corresponds to 74–82; the sequence is GDHLLGTKR. A helical membrane pass occupies residues 83-103; that stretch reads TMVLGAVVLAAGYFATGLSLY. Residues 104-106 are Periplasmic-facing; that stretch reads QPN. A helical membrane pass occupies residues 107–127; sequence LIFFALGTIAVGNGLFKANPA. Residues 128–146 are Cytoplasmic-facing; that stretch reads SLLSKCYPPKDPRLDGAFT. The chain crosses the membrane as a helical span at residues 147 to 167; it reads LFYMSINIGSLLSLSLAPVIA. The Periplasmic portion of the chain corresponds to 168–169; that stretch reads ER. A helical membrane pass occupies residues 170 to 190; it reads FGYTVTYYLCGIGLIFALLVY. Topologically, residues 191 to 212 are cytoplasmic; sequence FCCRHMVRHIGSEPDTKPLNWR. Transmembrane regions (helical) follow at residues 213 to 233 and 234 to 254; these read NLLL…WLMN and HVFI…FIFF. Topologically, residues 255–267 are cytoplasmic; that stretch reads REASKQDRLGRNK. A helical transmembrane segment spans residues 268–288; that stretch reads MFVAFILMIEAIVFYVLYAQM. Over 289 to 311 the chain is Periplasmic; that stretch reads PTSLNFFAINNVHHEILGFSINP. A helical membrane pass occupies residues 312 to 332; it reads VSFQALNPFWVVVASPILASI. Topologically, residues 333–350 are cytoplasmic; that stretch reads YTRLGSQNRDLSMPAKFT. A helical transmembrane segment spans residues 351–371; sequence LGMFLCSLGFLTAAAAGMWFA. At 372–379 the chain is on the periplasmic side; that stretch reads DAQGLTSP. A helical transmembrane segment spans residues 380-400; sequence WFIVLVYLFQSLGELMISALG. At 401-424 the chain is on the cytoplasmic side; the sequence is LAMVAALVPQYLMGFILGMWFLTQ. Residues 425–445 traverse the membrane as a helical segment; it reads AASFLIGGYVATFTATPEGMT. Residues 446 to 456 lie on the Periplasmic side of the membrane; that stretch reads DPLETLPIYTD. A helical membrane pass occupies residues 457–477; it reads VFGKIGMVTLVIALVMALLIP. Residues 478-493 lie on the Cytoplasmic side of the membrane; that stretch reads WLNRMINSSAAEDAVA.

It belongs to the major facilitator superfamily. Proton-dependent oligopeptide transporter (POT/PTR) (TC 2.A.17) family. DtpB subfamily.

The protein localises to the cell inner membrane. In terms of biological role, proton-dependent permease that transports di- and tripeptides. The sequence is that of Dipeptide and tripeptide permease B from Yersinia enterocolitica serotype O:8 / biotype 1B (strain NCTC 13174 / 8081).